Here is a 94-residue protein sequence, read N- to C-terminus: Co-chaperonin GroES (94 aa).

It belongs to the GroES chaperonin family. Heptamer of 7 subunits arranged in a ring. Interacts with the chaperonin GroEL.

It is found in the cytoplasm. Together with the chaperonin GroEL, plays an essential role in assisting protein folding. The GroEL-GroES system forms a nano-cage that allows encapsulation of the non-native substrate proteins and provides a physical environment optimized to promote and accelerate protein folding. GroES binds to the apical surface of the GroEL ring, thereby capping the opening of the GroEL channel. This is Co-chaperonin GroES from Ehrlichia chaffeensis.